A 174-amino-acid chain; its full sequence is Regenerating islet-derived protein 3-alpha (174 aa).

The N-terminal stretch at 1 to 25 (MLPRLSFNNVSWTLLYYLFIFQVRG) is a signal peptide. A propeptide spanning residues 26 to 36 (EDSQKAVPSTR) is cleaved from the precursor. 3 disulfides stabilise this stretch: Cys-39–Cys-50, Cys-67–Cys-170, and Cys-145–Cys-162. The region spanning 46–171 (YRSYCYTLVT…CDVELPFVCK (126 aa)) is the C-type lectin domain. The segment at 102-117 (WIWLHDPTMGQQPNGG) is sufficient to activate EXTL3. Zn(2+)-binding residues include His-106 and Glu-120.

In terms of assembly, forms a hexameric membrane-permeabilizing oligomeric pore on membrane phospholipids. The hexamer is formed by three dimers related by helical symmetry. Forms filaments, filamentation traps pore complexes and limits damage to host cells. Interacts with EXTL3. Post-translationally, proteolytic processing by trypsin removes an inhibitory N-terminal propeptide and is essential for peptidoglycan binding and antibacterial activity. As to expression, low expression found in healthy pancreas.

Its subcellular location is the secreted. Bactericidal C-type lectin. The lack of the EPN motif may explain its inability to bind peptidoglycan. In terms of biological role, acts as a hormone in response to different stimuli like anti-inflammatory signals, such as IL17A, or gut microbiome. Secreted by different cell types to activate its receptor EXTL3 and induce cell specific signaling pathways. Induced by IL17A in keratinocytes, regulates keratinocyte proliferation and differentiation after skin injury via activation of EXTL3-PI3K-AKT signaling pathway. In parallel, inhibits skin inflammation through the inhibition of inflammatory cytokines such as IL6 and TNF. In pancreas, is able to permealize beta-cells membrane and stimulate their proliferation. The protein is Regenerating islet-derived protein 3-alpha (Reg3a) of Rattus norvegicus (Rat).